Here is a 192-residue protein sequence, read N- to C-terminus: Probable nicotinate-nucleotide adenylyltransferase (192 aa).

Belongs to the NadD family.

The enzyme catalyses nicotinate beta-D-ribonucleotide + ATP + H(+) = deamido-NAD(+) + diphosphate. The protein operates within cofactor biosynthesis; NAD(+) biosynthesis; deamido-NAD(+) from nicotinate D-ribonucleotide: step 1/1. In terms of biological role, catalyzes the reversible adenylation of nicotinate mononucleotide (NaMN) to nicotinic acid adenine dinucleotide (NaAD). This chain is Probable nicotinate-nucleotide adenylyltransferase, found in Rhizobium leguminosarum bv. trifolii (strain WSM2304).